Reading from the N-terminus, the 215-residue chain is Sodium channel regulatory subunit beta-2 (215 aa).

An N-terminal signal peptide occupies residues 1 to 29 (MHRDAWLPRPAFSLTGLSLFFSLVPPGRS). Topologically, residues 30-157 (MEVTVPATLN…MEEPPERDST (128 aa)) are extracellular. An Ig-like C2-type domain is found at 32–154 (VTVPATLNVL…QVLMEEPPER (123 aa)). N-linked (GlcNAc...) asparagine glycosylation is found at asparagine 42, asparagine 66, and asparagine 74. Disulfide bonds link cysteine 50-cysteine 127 and cysteine 72-cysteine 75. Residues 158–179 (VAVIVGASVGGFLAVVILVLMV) form a helical membrane-spanning segment. Over 180 to 215 (VKCVRRKKEQKLSTDDLKTEEEGKTDGEGNPDDGAK) the chain is Cytoplasmic. The tract at residues 187–215 (KEQKLSTDDLKTEEEGKTDGEGNPDDGAK) is disordered. Basic and acidic residues predominate over residues 189–215 (QKLSTDDLKTEEEGKTDGEGNPDDGAK). Serine 192 is subject to Phosphoserine. Threonine 204 carries the phosphothreonine modification.

Belongs to the sodium channel auxiliary subunit SCN2B (TC 8.A.17) family. As to quaternary structure, a voltage-gated sodium (Nav) channel consists of an ion-conducting pore-forming alpha subunit functional on its own that is regulated by one or more beta subunits. The beta subunit SCN2B is disulfide-linked to the pore-forming alpha subunit. Interacts with SCN1A; regulatory subunit of SCN1A/Nav1.1. Interacts with SCN2A; regulatory subunit of SCN2A/Nav1.2. Interacts with SCN3A; regulatory subunit of SCN3A/Nav1.3. Interacts with SCN5A; regulatory subunit of SCN5A/Nav1.5. Interacts with SCN8A; regulatory subunit of SCN8A/Nav1.6. Interacts with SCN9A; regulatory subunit of SCN9A/Nav1.7. Interacts with SCN10A; regulatory subunit of SCN10A/Nav1.8. Interacts with TNR; may play a crucial role in clustering and regulation of activity of SCN2B-containing Nav channels at nodes of Ranvier.

It localises to the cell membrane. The protein localises to the cell projection. The protein resides in the axon. In terms of biological role, regulatory subunit of multiple voltage-gated sodium (Nav) channels directly mediating the depolarization of excitable membranes. Navs, also called VGSCs (voltage-gated sodium channels) or VDSCs (voltage-dependent sodium channels), operate by switching between closed and open conformations depending on the voltage difference across the membrane. In the open conformation they allow Na(+) ions to selectively pass through the pore, along their electrochemical gradient. The influx of Na+ ions provokes membrane depolarization, initiating the propagation of electrical signals throughout cells and tissues. The accessory beta subunits participate in localization and functional modulation of the Nav channels. Modulates the activity of SCN1A/Nav1.1, SCN2A/Nav1.2, SCN2A/Nav1.3, SCN5A/Nav1.5, SCN8A/Nav1.6, SCN9A/Nav1.7 and SCN10A/Nav1.8. This is Sodium channel regulatory subunit beta-2 from Homo sapiens (Human).